We begin with the raw amino-acid sequence, 401 residues long: Tyrosine--tRNA ligase (401 aa).

Positions 45–54 (PTAPDLHLGH) match the 'HIGH' region motif. The 'KMSKS' region motif lies at 230 to 234 (KMSKS). K233 serves as a coordination point for ATP. Positions 339–399 (IWLAKALVEC…GKRKFAKLKV (61 aa)) constitute an S4 RNA-binding domain.

It belongs to the class-I aminoacyl-tRNA synthetase family. TyrS type 2 subfamily. In terms of assembly, homodimer.

Its subcellular location is the cytoplasm. The catalysed reaction is tRNA(Tyr) + L-tyrosine + ATP = L-tyrosyl-tRNA(Tyr) + AMP + diphosphate + H(+). In terms of biological role, catalyzes the attachment of tyrosine to tRNA(Tyr) in a two-step reaction: tyrosine is first activated by ATP to form Tyr-AMP and then transferred to the acceptor end of tRNA(Tyr). The polypeptide is Tyrosine--tRNA ligase (Campylobacter jejuni subsp. jejuni serotype O:2 (strain ATCC 700819 / NCTC 11168)).